A 152-amino-acid chain; its full sequence is Leukocyte-associated immunoglobulin-like receptor 2 (152 aa).

The N-terminal stretch at 1 to 21 is a signal peptide; that stretch reads MSPHLTALLGLVLCLAQTIHT. The 89-residue stretch at 29–117 folds into the Ig-like C2-type domain; it reads PSISAEPGTV…GWSEHSDFLE (89 aa). An intrachain disulfide couples C49 to C101. Residues 120-152 form a disordered region; the sequence is VKESSGGPDSPDTEPGSSAGTVPGTEASGFDAP.

Its subcellular location is the secreted. The polypeptide is Leukocyte-associated immunoglobulin-like receptor 2 (LAIR2) (Homo sapiens (Human)).